A 480-amino-acid chain; its full sequence is Serralysin (480 aa).

H181 is a Zn(2+) binding site. Residue E182 is part of the active site. Zn(2+)-binding residues include H185 and H191. Ca(2+) is bound by residues R260, D263, D292, G294, G295, D297, T334, and E336. 2 Hemolysin-type calcium-binding repeats span residues 339–356 and 357–374; these read IGGSGNDVLIGNDAANTL and KGGAGDDIIYGGLGADNL.

Belongs to the peptidase M10B family. It depends on Zn(2+) as a cofactor. Ca(2+) is required as a cofactor.

Its subcellular location is the secreted. It carries out the reaction Preferential cleavage of bonds with hydrophobic residues in P1'.. The chain is Serralysin (prtA) from Photorhabdus laumondii subsp. laumondii (strain DSM 15139 / CIP 105565 / TT01) (Photorhabdus luminescens subsp. laumondii).